The chain runs to 246 residues: Protein lin-37 homolog (246 aa).

Met-1 is modified (N-acetylmethionine). Glycyl lysine isopeptide (Lys-Gly) (interchain with G-Cter in SUMO2) cross-links involve residues Lys-5 and Lys-7. A compositionally biased stretch (basic and acidic residues) spans 36-55 (DRERLDEEPGKTSLDTHNKD). Disordered regions lie at residues 36–90 (DRER…GGPQ) and 127–209 (PTVR…LIYR). Ser-135 and Ser-138 each carry phosphoserine. Positions 163 to 172 (LPPPTAPGPP) are enriched in pro residues. Thr-167 is modified (phosphothreonine). Ser-182 and Ser-202 each carry phosphoserine.

In terms of assembly, component of the DREAM complex (also named LINC complex) at least composed of E2F4, E2F5, LIN9, LIN37, LIN52, LIN54, MYBL1, MYBL2, RBL1, RBL2, RBBP4, TFDP1 and TFDP2. The complex exists in quiescent cells where it represses cell cycle-dependent genes. It dissociates in S phase when LIN9, LIN37, LIN52 and LIN54 form a subcomplex that binds to MYBL2.

In Bos taurus (Bovine), this protein is Protein lin-37 homolog (LIN37).